A 341-amino-acid chain; its full sequence is D-erythrose-4-phosphate dehydrogenase (341 aa).

Arg-12–Ile-13 is an NAD(+) binding site. Substrate-binding positions include Ser-154–Thr-156, Arg-200, Thr-213–Lys-214, and Arg-236. Cys-155 acts as the Nucleophile in catalysis. Asn-318 serves as a coordination point for NAD(+).

Belongs to the glyceraldehyde-3-phosphate dehydrogenase family. Epd subfamily. Homotetramer.

The protein resides in the cytoplasm. The enzyme catalyses D-erythrose 4-phosphate + NAD(+) + H2O = 4-phospho-D-erythronate + NADH + 2 H(+). It functions in the pathway cofactor biosynthesis; pyridoxine 5'-phosphate biosynthesis; pyridoxine 5'-phosphate from D-erythrose 4-phosphate: step 1/5. In terms of biological role, catalyzes the NAD-dependent conversion of D-erythrose 4-phosphate to 4-phosphoerythronate. This Edwardsiella ictaluri (strain 93-146) protein is D-erythrose-4-phosphate dehydrogenase.